Reading from the N-terminus, the 31-residue chain is Cytochrome b6-f complex subunit 6 (31 aa).

A helical membrane pass occupies residues I4–G24.

It belongs to the PetL family. In terms of assembly, the 4 large subunits of the cytochrome b6-f complex are cytochrome b6, subunit IV (17 kDa polypeptide, PetD), cytochrome f and the Rieske protein, while the 4 small subunits are PetG, PetL, PetM and PetN. The complex functions as a dimer.

The protein localises to the plastid. It localises to the chloroplast thylakoid membrane. Its function is as follows. Component of the cytochrome b6-f complex, which mediates electron transfer between photosystem II (PSII) and photosystem I (PSI), cyclic electron flow around PSI, and state transitions. PetL is important for photoautotrophic growth as well as for electron transfer efficiency and stability of the cytochrome b6-f complex. The chain is Cytochrome b6-f complex subunit 6 from Lepidium virginicum (Virginia pepperweed).